A 476-amino-acid chain; its full sequence is Neuropeptide-like precursor 1 (476 aa).

A signal peptide spans 1–34 (MNDAGASIGRHRGCLLLFVALAVAFSSYVEQVES). Val-133 carries the post-translational modification Valine amide. 2 consecutive propeptides follow at residues 160–232 (DEAT…NSYF) and 259–476 (YVMP…RKNQ). Disordered regions lie at residues 275–298 (QNDI…DGEV) and 360–385 (PEVE…SHPT). Over residues 286–297 (DDDDDDDDDDGE) the composition is skewed to acidic residues.

Neuropeptide-like precursor 1-1: Expressed in antennal lobe (AL), corpora cardiaca (CC), corpora allata (CA) and gnathal ganglion (GNG) (at protein level). Expression in AL detected in all animals, in GNG in most animals, expression in CC and CA in few animals (at protein level). Neuropeptide-like precursor 1-2: Expressed in antennal lobe (AL), corpora cardiaca (CC), corpora allata (CA) and gnathal ganglion (GNG) (at protein level). Expression in AL detected in all animals, in GNG in some animals, expression in CC and CA in few animals (at protein level). Neuropeptide-like precursor 1-3: Not expressed in antennal lobe (AL), corpora cardiaca (CC), corpora allata (CA) and gnathal ganglion (GNG) (at protein level). Neuropeptide-like precursor 1-4: Expressed in antennal lobe (AL) and gnathal ganglion (GNG) (at protein level). Expression in AL detected in most animals, in GNG in some animals (at protein level). Not expressed in CC and CA (at protein level). YRVamide: Expressed in antennal lobe (AL), corpora cardiaca (CC), corpora allata (CA) and gnathal ganglion (GNG) (at protein level). Expression in AL and GNG detected in most animals, expression in CC and CA in few animals (at protein level). Extended YRVamide: Expressed in antennal lobe (AL) and gnathal ganglion (GNG) (at protein level). Expression in AL detected in most animals, in GNG in some animals (at protein level). Not expressed in corpora cardiaca (CC) and corpora allata (CA) (at protein level). Neuropeptide-like precursor 1-6: Expressed in antennal lobe (AL), corpora cardiaca (CC), corpora allata (CA) and gnathal ganglion (GNG) (at protein level). Expression in GNG detected in all animals, expression in AL in most animals, in CC and CA in few animals (at protein level). Neuropeptide-like precursor 1-6(1-11): Expressed in antennal lobe (AL) and gnathal ganglion (GNG) in most animals (at protein level). Not expressed in corpora cardiaca (CC) and corpora allata (CA) (at protein level). Neuropeptide-like precursor 1-9: Expressed in antennal lobe (AL) and gnathal ganglion (GNG) (at protein level). Expression in AL detected in all animals in GNG in most (at protein level). Not expressed in corpora cardiaca (CC) and corpora allata (CA) (at protein level).

It localises to the secreted. The sequence is that of Neuropeptide-like precursor 1 from Agrotis ipsilon (Black cutworm moth).